The chain runs to 119 residues: MARVKRGVVAHRRHKKILARTKGYYGARSRVYRVAFQAVIKAGQYAYRDRRQKKRQFRALWIARINAGARQNGLSYSRMIDGLKKAQVIIDRRVLADIAMHDAVAFAALAEKAKGALAA.

It belongs to the bacterial ribosomal protein bL20 family.

Functionally, binds directly to 23S ribosomal RNA and is necessary for the in vitro assembly process of the 50S ribosomal subunit. It is not involved in the protein synthesizing functions of that subunit. The polypeptide is Large ribosomal subunit protein bL20 (Acinetobacter baumannii (strain SDF)).